Here is a 153-residue protein sequence, read N- to C-terminus: Large ribosomal subunit protein uL15 (153 aa).

A disordered region spans residues 21–41; sequence RGIGSGKGKTGGRGIKGQKSR. Residues 23–35 show a composition bias toward gly residues; sequence IGSGKGKTGGRGI.

The protein belongs to the universal ribosomal protein uL15 family. In terms of assembly, part of the 50S ribosomal subunit.

Functionally, binds to the 23S rRNA. The polypeptide is Large ribosomal subunit protein uL15 (Rickettsia africae (strain ESF-5)).